A 90-amino-acid chain; its full sequence is MTSRLSDPNSSARSDMSVPLYPTASPVSVEAYYSESEDEAANDFLVRMGRQQSVLRRRRRRTRCVGMVIACLLVAVLSGGFGALLMWLLR.

Residues M1–M67 lie on the Intravirion side of the membrane. Residues Y21–A24 carry the Internalization motif motif. Residues E30–E39 are acidic. A phosphoserine; by host CK2 mark is found at S34 and S36. A helical; Signal-anchor for type II membrane protein membrane pass occupies residues V68–L88. The Virion surface segment spans residues L89–R90.

Belongs to the alphaherpesvirinae envelope protein US9 family. In terms of processing, phosphorylated on serines within the acidic cluster, possibly by host CK2. Phosphorylation determines whether endocytosed viral US9 traffics to the trans-Golgi network or recycles to the cell membrane.

It is found in the virion membrane. It localises to the host Golgi apparatus membrane. Its subcellular location is the host smooth endoplasmic reticulum membrane. The protein localises to the host cell membrane. Essential for the anterograde spread of the infection throughout the host nervous system. Together with the gE/gI heterodimer, US9 is involved in the sorting and transport of viral structural components toward axon tips. This Homo sapiens (Human) protein is Envelope protein US9.